A 208-amino-acid chain; its full sequence is Thymidylate kinase (208 aa).

10–17 (GPEGSGKT) provides a ligand contact to ATP.

The protein belongs to the thymidylate kinase family.

It catalyses the reaction dTMP + ATP = dTDP + ADP. In terms of biological role, phosphorylation of dTMP to form dTDP in both de novo and salvage pathways of dTTP synthesis. The protein is Thymidylate kinase of Bacillus cereus (strain 03BB102).